The chain runs to 519 residues: Arabinose import ATP-binding protein AraG 2 (519 aa).

2 consecutive ABC transporter domains span residues 29-264 (LSLD…MVGR) and 264-515 (RSIE…LIKL). ATP is bound at residue 61 to 68 (GENGAGKS).

It belongs to the ABC transporter superfamily. Arabinose importer (TC 3.A.1.2.2) family. In terms of assembly, the complex is composed of two ATP-binding proteins (AraG), two transmembrane proteins (AraH) and a solute-binding protein (AraF).

Its subcellular location is the cell inner membrane. It carries out the reaction L-arabinose(out) + ATP + H2O = L-arabinose(in) + ADP + phosphate + H(+). Functionally, part of the ABC transporter complex AraFGH involved in arabinose import. Responsible for energy coupling to the transport system. The chain is Arabinose import ATP-binding protein AraG 2 from Burkholderia ambifaria (strain ATCC BAA-244 / DSM 16087 / CCUG 44356 / LMG 19182 / AMMD) (Burkholderia cepacia (strain AMMD)).